Consider the following 115-residue polypeptide: Large ribosomal subunit protein bL20c (115 aa).

It belongs to the bacterial ribosomal protein bL20 family.

It localises to the plastid. The protein resides in the chloroplast. Functionally, binds directly to 23S ribosomal RNA and is necessary for the in vitro assembly process of the 50S ribosomal subunit. It is not involved in the protein synthesizing functions of that subunit. The protein is Large ribosomal subunit protein bL20c of Cycas taitungensis (Prince sago).